A 431-amino-acid chain; its full sequence is Tol-Pal system protein TolB (431 aa).

The first 19 residues, methionine 1–serine 19, serve as a signal peptide directing secretion.

The protein belongs to the TolB family. In terms of assembly, the Tol-Pal system is composed of five core proteins: the inner membrane proteins TolA, TolQ and TolR, the periplasmic protein TolB and the outer membrane protein Pal. They form a network linking the inner and outer membranes and the peptidoglycan layer.

It is found in the periplasm. Part of the Tol-Pal system, which plays a role in outer membrane invagination during cell division and is important for maintaining outer membrane integrity. TolB occupies a key intermediary position in the Tol-Pal system because it communicates directly with both membrane-embedded components, Pal in the outer membrane and TolA in the inner membrane. The protein is Tol-Pal system protein TolB of Wigglesworthia glossinidia brevipalpis.